Here is a 730-residue protein sequence, read N- to C-terminus: Cyclin-dependent kinase 12 (730 aa).

2 disordered regions span residues Met1–Ser230 and Phe246–Arg283. The segment covering Thr9–Arg21 has biased composition (basic and acidic residues). The span at Ser57 to Trp67 shows a compositional bias: polar residues. The span at Gly75–Lys94 shows a compositional bias: basic and acidic residues. 2 stretches are compositionally biased toward basic residues: residues Arg95–Asn122 and Lys151–Ser163. Residues Phe194 to Phe203 show a composition bias toward low complexity. The segment covering Ser204–Ser230 has biased composition (pro residues). Residues Met313 to Ile605 form the Protein kinase domain. ATP contacts are provided by residues Ile317–Val325, Lys340, and Glu398–Asp403. Residue Asp444 is the Proton acceptor of the active site. Residues Asp623–Lys730 are disordered. His625 lines the ATP pocket. Residues Asn676–Ala688 are compositionally biased toward basic residues. Residues Asn714 to Lys730 are compositionally biased toward polar residues.

It belongs to the protein kinase superfamily. CMGC Ser/Thr protein kinase family. CDC2/CDKX subfamily.

The protein localises to the nucleus. It catalyses the reaction [DNA-directed RNA polymerase] + ATP = phospho-[DNA-directed RNA polymerase] + ADP + H(+). The catalysed reaction is L-seryl-[protein] + ATP = O-phospho-L-seryl-[protein] + ADP + H(+). It carries out the reaction L-threonyl-[protein] + ATP = O-phospho-L-threonyl-[protein] + ADP + H(+). Its function is as follows. Cyclin-dependent kinase which displays CTD kinase activity: hyperphosphorylates 'Ser-2' in the C-terminal heptapeptide repeat domain (CTD) of the largest RNA polymerase II subunit, thereby acting as a key regulator of transcription elongation. Required for normal reproduction. This Caenorhabditis elegans protein is Cyclin-dependent kinase 12.